The chain runs to 883 residues: Probable pre-mRNA-splicing factor ATP-dependent RNA helicase DEAH8 (883 aa).

The region spanning 232 to 395 (LKLIEENQVL…FDSARIYLIP (164 aa)) is the Helicase ATP-binding domain. 245 to 252 (GETGSGKT) provides a ligand contact to ATP. Residues 342-345 (DEAH) carry the DEAH box motif. The Helicase C-terminal domain occupies 416–589 (TVIRTVVQIH…SVVLTLKSLG (174 aa)). The disordered stretch occupies residues 845 to 883 (EDTRPKKTQRRIEEASTSKVDTNKKTRTSKVDTNKKSKR).

The protein belongs to the DEAD box helicase family. DEAH subfamily. PRP2 sub-subfamily. As to expression, predominantly expressed in flowers.

It carries out the reaction ATP + H2O = ADP + phosphate + H(+). In terms of biological role, may be involved in pre-mRNA splicing. The chain is Probable pre-mRNA-splicing factor ATP-dependent RNA helicase DEAH8 from Arabidopsis thaliana (Mouse-ear cress).